We begin with the raw amino-acid sequence, 908 residues long: Structural core protein VP2 (908 aa).

The span at 1–19 (MANPQNRVQTERQQNNSSP) shows a compositional bias: polar residues. The disordered stretch occupies residues 1–25 (MANPQNRVQTERQQNNSSPYLRGDE).

It belongs to the orbivirus VP3 family.

The protein localises to the virion. This Ixodes (gulls) protein is Structural core protein VP2 (Segment-2).